The primary structure comprises 29 residues: Cyclotide mobo-B (29 aa).

The cyclopeptide (Gly-Asn) cross-link spans 1-29 (GKPICGETCAKGKCYTPKCTCNWPICYKN). 3 disulfides stabilise this stretch: C5–C19, C9–C21, and C14–C26.

Belongs to the cyclotide family. In terms of processing, this is a cyclic peptide.

Functionally, probably participates in a plant defense mechanism. The protein is Cyclotide mobo-B of Melicytus obovatus (Hymenanthera obovata).